A 287-amino-acid polypeptide reads, in one-letter code: Pyridoxal kinase PdxY (287 aa).

Residues serine 9 and 44 to 45 each bind substrate; that span reads MQ. Aspartate 111, alanine 142, glutamate 147, and lysine 180 together coordinate ATP. A substrate-binding site is contributed by aspartate 221.

It belongs to the pyridoxine kinase family. PdxY subfamily. As to quaternary structure, homodimer. The cofactor is Mg(2+).

It carries out the reaction pyridoxal + ATP = pyridoxal 5'-phosphate + ADP + H(+). It functions in the pathway cofactor metabolism; pyridoxal 5'-phosphate salvage; pyridoxal 5'-phosphate from pyridoxal: step 1/1. In terms of biological role, pyridoxal kinase involved in the salvage pathway of pyridoxal 5'-phosphate (PLP). Catalyzes the phosphorylation of pyridoxal to PLP. The chain is Pyridoxal kinase PdxY from Burkholderia mallei (strain ATCC 23344).